Consider the following 431-residue polypeptide: Serine--tRNA ligase (431 aa).

Residue 235-237 coordinates L-serine; the sequence is TAE. Residues 266-268 and V282 each bind ATP; that span reads RRE. E289 serves as a coordination point for L-serine. Residue 353–356 participates in ATP binding; the sequence is EASS. Residue S389 coordinates L-serine.

This sequence belongs to the class-II aminoacyl-tRNA synthetase family. Type-1 seryl-tRNA synthetase subfamily. As to quaternary structure, homodimer. The tRNA molecule binds across the dimer.

The protein resides in the cytoplasm. The enzyme catalyses tRNA(Ser) + L-serine + ATP = L-seryl-tRNA(Ser) + AMP + diphosphate + H(+). It carries out the reaction tRNA(Sec) + L-serine + ATP = L-seryl-tRNA(Sec) + AMP + diphosphate + H(+). Its pathway is aminoacyl-tRNA biosynthesis; selenocysteinyl-tRNA(Sec) biosynthesis; L-seryl-tRNA(Sec) from L-serine and tRNA(Sec): step 1/1. Functionally, catalyzes the attachment of serine to tRNA(Ser). Is also able to aminoacylate tRNA(Sec) with serine, to form the misacylated tRNA L-seryl-tRNA(Sec), which will be further converted into selenocysteinyl-tRNA(Sec). This is Serine--tRNA ligase from Pelodictyon phaeoclathratiforme (strain DSM 5477 / BU-1).